The following is a 745-amino-acid chain: 1,4-alpha-glucan branching enzyme GlgB (745 aa).

The active-site Nucleophile is the D416. E469 serves as the catalytic Proton donor.

Belongs to the glycosyl hydrolase 13 family. GlgB subfamily. As to quaternary structure, monomer.

The catalysed reaction is Transfers a segment of a (1-&gt;4)-alpha-D-glucan chain to a primary hydroxy group in a similar glucan chain.. It participates in glycan biosynthesis; glycogen biosynthesis. In terms of biological role, catalyzes the formation of the alpha-1,6-glucosidic linkages in glycogen by scission of a 1,4-alpha-linked oligosaccharide from growing alpha-1,4-glucan chains and the subsequent attachment of the oligosaccharide to the alpha-1,6 position. This is 1,4-alpha-glucan branching enzyme GlgB from Shewanella sp. (strain MR-7).